We begin with the raw amino-acid sequence, 367 residues long: MSNQHPKKVLEMVIRALIVDDSALIRKVLSDILNQDPKIAVIGTAINGEDGLEKVRKLKPDVVLLDNIMPVLDGLKTLSHIMEEFPTPVVIVSALGEKAEEITLTALEYGAVDVIEKPSGILSQSMHEMAEEICAKVRAVSKADLNNLGCIRDLEHQIPENHRKKKNSLREKTSVRNVLAIGASTGGPRALEKLIGSFPAEIPAAVLIVQHMPPGFTASLSKRLDAKSALRVKEAQEGDIMEEGTVFIAPGDYHMEIVRNKVNGFGEDTVHLSCGPKELGSRPSVNVLFRSVARIYGPRVISLVLTGMNCDGADGAEEIKKMGGKVIAEDQSSCVIYGMPGEIVRRNLADFVLPLDKMADEIVKIVR.

One can recognise a Response regulatory domain in the interval 15-132 (RALIVDDSAL…SQSMHEMAEE (118 aa)). Residue D66 is modified to 4-aspartylphosphate. Residues 172–367 (KTSVRNVLAI…MADEIVKIVR (196 aa)) form the CheB-type methylesterase domain. Residues S184, H211, and D311 contribute to the active site.

Belongs to the CheB family. Post-translationally, phosphorylated by CheA. Phosphorylation of the N-terminal regulatory domain activates the methylesterase activity.

The protein localises to the cytoplasm. The enzyme catalyses [protein]-L-glutamate 5-O-methyl ester + H2O = L-glutamyl-[protein] + methanol + H(+). It carries out the reaction L-glutaminyl-[protein] + H2O = L-glutamyl-[protein] + NH4(+). Functionally, involved in chemotaxis. Part of a chemotaxis signal transduction system that modulates chemotaxis in response to various stimuli. Catalyzes the demethylation of specific methylglutamate residues introduced into the chemoreceptors (methyl-accepting chemotaxis proteins or MCP) by CheR. Also mediates the irreversible deamidation of specific glutamine residues to glutamic acid. This chain is Protein-glutamate methylesterase/protein-glutamine glutaminase 2, found in Methanosarcina mazei (strain ATCC BAA-159 / DSM 3647 / Goe1 / Go1 / JCM 11833 / OCM 88) (Methanosarcina frisia).